A 547-amino-acid polypeptide reads, in one-letter code: Cytochrome P450 monooxygenase 81 (547 aa).

The next 2 membrane-spanning stretches (helical) occupy residues 6-23 and 106-124; these read IPTQ…LFLL and AFFA…ATAG. Residue C483 coordinates heme. N-linked (GlcNAc...) asparagine glycosylation is found at N503 and N516.

It belongs to the cytochrome P450 family. It depends on heme as a cofactor.

The protein localises to the membrane. It functions in the pathway secondary metabolite biosynthesis. Functionally, cytochrome P450 monooxygenase that is able to use dehydroabietic acid as a substrate for oxidation. This is Cytochrome P450 monooxygenase 81 from Postia placenta (strain ATCC 44394 / Madison 698-R) (Brown rot fungus).